The primary structure comprises 535 residues: Calcium-dependent protein kinase 7 (535 aa).

A disordered region spans residues 1 to 29 (MGNCCGNPSSATNQSKQGKPKNKNNPFYS). Gly2 carries the N-myristoyl glycine lipid modification. The Protein kinase domain maps to 59–317 (YDLGREVGRG…AAQVLEHTWI (259 aa)). ATP is bound by residues 65 to 73 (VGRGEFGIT) and Lys88. The active-site Proton acceptor is the Asp183. At Ser223 the chain carries Phosphoserine. The autoinhibitory domain stretch occupies residues 323–353 (APNVSLGETVKARLKQFSVMNKLKKRALRVI). EF-hand domains lie at 360–395 (EEAA…AGQQ), 396–431 (IADT…LKKM), 432–467 (ANDE…ELDN), and 468–504 (TSSE…GTDW). 18 residues coordinate Ca(2+): Asp373, Asn375, Lys379, Glu384, Asp409, Asp411, Asp413, Thr415, Glu420, Asp445, Asn447, Ser449, Tyr451, Glu456, Asp482, Asp484, Asp486, and Arg488. Position 490 is a phosphoserine (Ser490). Ca(2+) is bound at residue Glu493.

It belongs to the protein kinase superfamily. Ser/Thr protein kinase family. CDPK subfamily.

It localises to the cell membrane. The enzyme catalyses L-seryl-[protein] + ATP = O-phospho-L-seryl-[protein] + ADP + H(+). It catalyses the reaction L-threonyl-[protein] + ATP = O-phospho-L-threonyl-[protein] + ADP + H(+). Its activity is regulated as follows. Activated by calcium. Autophosphorylation may play an important role in the regulation of the kinase activity. Its function is as follows. May play a role in signal transduction pathways that involve calcium as a second messenger. The protein is Calcium-dependent protein kinase 7 (CPK7) of Arabidopsis thaliana (Mouse-ear cress).